The following is a 171-amino-acid chain: MARNDKNDKNEQTDGLVERLVTVDRVAKVVKGGRIFSFTALTVVGDGNGRVGFGRGKAREVPAAIQKALEAAKRNMITVELNDATLYHPIKARHGASKVYMQPASEGTGVIAGGAMRAVLEVAGVKDVLTKCYGSTNTANVVRATFNGLRDMSTPEKMAAKRGKSVDEILG.

The S5 DRBM domain maps to 16–79 (LVERLVTVDR…EAAKRNMITV (64 aa)).

This sequence belongs to the universal ribosomal protein uS5 family. As to quaternary structure, part of the 30S ribosomal subunit. Contacts proteins S4 and S8.

With S4 and S12 plays an important role in translational accuracy. In terms of biological role, located at the back of the 30S subunit body where it stabilizes the conformation of the head with respect to the body. This is Small ribosomal subunit protein uS5 from Psychrobacter arcticus (strain DSM 17307 / VKM B-2377 / 273-4).